Reading from the N-terminus, the 410-residue chain is Pyrophosphate--fructose 6-phosphate 1-phosphotransferase (410 aa).

Gly-12 lines the diphosphate pocket. Asp-121 is a binding site for Mg(2+). Residues 149–151 (TID), 194–196 (MGR), Glu-266, and 323–326 (YFSR) contribute to the substrate site. Catalysis depends on Asp-151, which acts as the Proton acceptor.

The protein belongs to the phosphofructokinase type A (PFKA) family. PPi-dependent PFK group II subfamily. Clade 'P' sub-subfamily. In terms of assembly, homodimer or homotetramer. Mg(2+) is required as a cofactor.

It is found in the cytoplasm. It catalyses the reaction beta-D-fructose 6-phosphate + diphosphate = beta-D-fructose 1,6-bisphosphate + phosphate + H(+). The protein operates within carbohydrate degradation; glycolysis; D-glyceraldehyde 3-phosphate and glycerone phosphate from D-glucose: step 3/4. Its activity is regulated as follows. Non-allosteric. In terms of biological role, catalyzes the phosphorylation of D-fructose 6-phosphate, the first committing step of glycolysis. Uses inorganic phosphate (PPi) as phosphoryl donor instead of ATP like common ATP-dependent phosphofructokinases (ATP-PFKs), which renders the reaction reversible, and can thus function both in glycolysis and gluconeogenesis. Consistently, PPi-PFK can replace the enzymes of both the forward (ATP-PFK) and reverse (fructose-bisphosphatase (FBPase)) reactions. This Mastigamoeba balamuthi (Phreatamoeba balamuthi) protein is Pyrophosphate--fructose 6-phosphate 1-phosphotransferase.